A 460-amino-acid chain; its full sequence is tRNA (guanine(10)-N(2))-methyltransferase TRMT11 (460 aa).

N-acetylalanine is present on Ala-2.

Belongs to the class I-like SAM-binding methyltransferase superfamily. TRM11 methyltransferase family. In terms of assembly, part of the heterodimeric TRMT11-TRM112 methyltransferase complex; this complex forms an active tRNA methyltransferase, where TRMT112 acts as an activator of the catalytic subunit TRMT11.

The protein localises to the cytoplasm. It carries out the reaction guanosine(10) in tRNA + S-adenosyl-L-methionine = N(2)-methylguanosine(10) in tRNA + S-adenosyl-L-homocysteine + H(+). Functionally, catalytic subunit of the TRMT11-TRM112 methyltransferase complex, that specifically mediates the S-adenosyl-L-methionine-dependent N(2)-methylation of guanosine nucleotide at position 10 (m2G10) in tRNAs. This is one of the major tRNA (guanine-N(2))-methyltransferases. In Bos taurus (Bovine), this protein is tRNA (guanine(10)-N(2))-methyltransferase TRMT11.